Here is a 525-residue protein sequence, read N- to C-terminus: MAQNIHDHRILILDFGSQYTQLIARRVREIGVYCEIKAFDITDDELNEFNPKGIILAGGPESVTQLGGPRAPEGLFDRGIPVLGICYGMQTMAEQLGGRVASSEKREFGYAQVKVRAKGPLLADITDHLTPAGDSLLDVWMSHGDKVVAMPEGFELLASTESAPIAAMQDLSRNLYGVQFHPEVTHTLQGKRILEHFVLTISGCEALWTPAKIVDDAVRQIREQVGSDKVLLGLSGGVDSSVTAALLHKAIGDQLTCVFVDNGLLRLHEGDQVMDMFASNMGVKVIRVDAEDLFLSKLKGVNDPEQKRKIIGNTFIDVFDDEAANIKDVNWLAQGTIYPDVIESAASKTGKAHVIKSHHNVGGLPETMKMKLVEPLRELFKDEVRKIGLELGLPYDMVYRHPFPGPGLGVRILGEVKKEYADILRRADAIFLEELHRADLYHKTSQAFAVFLPVKSVGVVGDARRYEYVIAIRAVETVDFMTARWARLPYELLETVSNRIINEISGVSRVTYDISSKPPATIEWE.

Residues 9–207 (RILILDFGSQ…VLTISGCEAL (199 aa)) enclose the Glutamine amidotransferase type-1 domain. The active-site Nucleophile is C86. Catalysis depends on residues H181 and E183. The GMPS ATP-PPase domain occupies 208–400 (WTPAKIVDDA…LGLPYDMVYR (193 aa)). 235 to 241 (SGGVDSS) serves as a coordination point for ATP.

As to quaternary structure, homodimer.

The catalysed reaction is XMP + L-glutamine + ATP + H2O = GMP + L-glutamate + AMP + diphosphate + 2 H(+). It functions in the pathway purine metabolism; GMP biosynthesis; GMP from XMP (L-Gln route): step 1/1. Its function is as follows. Catalyzes the synthesis of GMP from XMP. The polypeptide is GMP synthase [glutamine-hydrolyzing] (Marinobacter nauticus (strain ATCC 700491 / DSM 11845 / VT8) (Marinobacter aquaeolei)).